The primary structure comprises 250 residues: DNA repair protein RecO (250 aa).

This sequence belongs to the RecO family.

In terms of biological role, involved in DNA repair and RecF pathway recombination. This Staphylococcus aureus (strain COL) protein is DNA repair protein RecO.